Here is a 364-residue protein sequence, read N- to C-terminus: Inner membrane ABC transporter permease protein YejB (364 aa).

Topologically, residues 1–8 (MGAYLIRR) are periplasmic. The helical transmembrane segment at 9-29 (LLLVIPTLWAIITINFFIVQI) threads the bilayer. Topologically, residues 30–37 (APGGPVDQ) are cytoplasmic. A helical membrane pass occupies residues 38–58 (AIAAIEFGNAGVLPGAGGEGV). Residues 59–135 (RASHAQTGVG…LTLIKDSLPV (77 aa)) lie on the Periplasmic side of the membrane. One can recognise an ABC transmembrane type-1 domain in the interval 133 to 348 (LPVSITLGLW…LIGLLLNIVS (216 aa)). A helical transmembrane segment spans residues 136 to 156 (SITLGLWSTLIIYLVSIPLGI). Residues 157-172 (RKAVYNGSRFDVWSSA) are Cytoplasmic-facing. Residues 173–193 (FIIIGYAIPAFLFAILLIVFF) form a helical membrane-spanning segment. At 194–224 (AGGSYFDLFPLRGLVSANFDSLPWYQKITDY) the chain is on the periplasmic side. Residues 225 to 245 (LWHITLPVLATVIGGFAALTM) traverse the membrane as a helical segment. The Cytoplasmic segment spans residues 246–284 (LTKNSFLDEVRKQYVVTARAKGVSEKNILWKHVFRNAML). A helical transmembrane segment spans residues 285–305 (LVIAGFPATFISMFFTGSLLI). Residues 306 to 326 (EVMFSLNGLGLLGYEATVSRD) are Periplasmic-facing. Residues 327-347 (YPVMFGTLYIFTLIGLLLNIV) form a helical membrane-spanning segment. The Cytoplasmic portion of the chain corresponds to 348–364 (SDISYTLVDPRIDFEGR).

The protein belongs to the binding-protein-dependent transport system permease family. OppBC subfamily.

The protein localises to the cell inner membrane. Functionally, probably part of a binding-protein-dependent transport system. Probably responsible for the translocation of the substrate across the membrane. The polypeptide is Inner membrane ABC transporter permease protein YejB (yejB) (Escherichia coli O157:H7).